The following is a 471-amino-acid chain: MENLKHIITLGQVIHKRCEEMKYCKKQCRRLGHRVLGLIKPLEMLQDQGKRSVPSEKLTTAMNRFKAALEEANGEIEKFSNRSNICRFLTASQDKILFKDVNRKLSDVWKELSLLLQVEQRMPVSPISQGASWAQEDQQDADEDRRAFQMLRRDNEKIEASLRRLEINMKEIKETLRQYLPPKCMQEIPQEQIKEIKKEQLSGSPWILLRENEVSTLYKGEYHRAPVAIKVFKKLQAGSIAIVRQTFNKEIKTMKKFESPNILRIFGICIDETVTPPQFSIVMEYCELGTLRELLDREKDLTLGKRMVLVLGAARGLYRLHHSEAPELHGKIRSSNFLVTQGYQVKLAGFELRKTQTSMSLGTTREKTDRVKSTAYLSPQELEDVFYQYDVKSEIYSFGIVLWEIATGDIPFQGCNSEKIRKLVAVKRQQEPLGEDCPSELREIIDECRAHDPSVRPSVDEILKKLSTFSK.

Residues 1-149 form an N-terminal bundle and brace (NBB); mediates INSP6 binding region; the sequence is MENLKHIITL…DADEDRRAFQ (149 aa). Residues 55–84 are a coiled coil; it reads SEKLTTAMNRFKAALEEANGEIEKFSNRSN. Phosphoserine is present on Ser125. A coiled-coil region spans residues 139 to 180; sequence QDADEDRRAFQMLRRDNEKIEASLRRLEINMKEIKETLRQYL. A Protein kinase domain is found at 194–469; sequence KEIKKEQLSG…DEILKKLSTF (276 aa). ATP-binding positions include 209 to 217 and Lys230; that span reads LRENEVSTL. At Thr357 the chain carries Phosphothreonine; by RIPK3. 2 positions are modified to phosphoserine; by RIPK3: Ser358 and Ser360.

It belongs to the protein kinase superfamily. Homooligomer. Homotrimer; forms homotrimers on necroptosis induction. Upon TNF-induced necrosis, forms in complex with PGAM5, RIPK1 and RIPK3. Within this complex, may play a role in the proper targeting of RIPK1-RIPK3 to its downstream effector PGAM5. Interacts with RIPK3; the interaction is direct and promotes its phosphorylation and subsequent activation. Post-translationally, phosphorylation by RIPK3 induces a conformational switch that is required for necroptosis. It also induces homotrimerization and localization to the plasma membrane.

It localises to the cytoplasm. The protein localises to the cell membrane. Its subcellular location is the nucleus. Its activity is regulated as follows. Activated via binding to highly phosphorylated inositol phosphates such as inositolhexakisphosphate (InsP6) which mediates the release of an N-terminal auto-inhibitory region. Activation requires not only RIPK3-dependent phosphorylation but also binding to highly phosphorylated inositol phosphates. Inhibited by necrosulfonamide, a specific inhibitor of necroptosis that targets Cys-86. Its function is as follows. Pseudokinase that plays a key role in TNF-induced necroptosis, a programmed cell death process. Does not have protein kinase activity. Activated following phosphorylation by RIPK3, leading to homotrimerization, localization to the plasma membrane and execution of programmed necrosis characterized by calcium influx and plasma membrane damage. In addition to TNF-induced necroptosis, necroptosis can also take place in the nucleus in response to orthomyxoviruses infection: following activation by ZBP1, MLKL is phosphorylated by RIPK3 in the nucleus, triggering disruption of the nuclear envelope and leakage of cellular DNA into the cytosol.following ZBP1 activation, which senses double-stranded Z-RNA structures, nuclear RIPK3 catalyzes phosphorylation and activation of MLKL, promoting disruption of the nuclear envelope and leakage of cellular DNA into the cytosol. Binds to highly phosphorylated inositol phosphates such as inositolhexakisphosphate (InsP6) which is essential for its necroptotic function. In Homo sapiens (Human), this protein is Mixed lineage kinase domain-like protein.